Here is an 870-residue protein sequence, read N- to C-terminus: Disks large homolog 2 (870 aa).

2 S-palmitoyl cysteine lipidation sites follow: Cys-5 and Cys-7. Position 28 is a phosphoserine (Ser-28). Tyr-58 carries the post-translational modification Phosphotyrosine. At Ser-65 the chain carries Phosphoserine. 2 consecutive PDZ domains span residues 98–184 (EITL…VRRR) and 193–279 (EIKL…VGKP). Phosphoserine occurs at positions 307, 328, 360, 365, 406, and 414. One can recognise a PDZ 3 domain in the interval 421–501 (KVVLHKGSTG…QTVTIIAQYQ (81 aa)). Tyr-505 is modified (phosphotyrosine). Ser-528, Ser-530, Ser-553, Ser-627, and Ser-635 each carry phosphoserine. The SH3 domain maps to 536 to 606 (KRSLYVRAMF…PSKRRVERKE (71 aa)). The 176-residue stretch at 680 to 855 (TRPVIILGPM…IYNQCKLVIE (176 aa)) folds into the Guanylate kinase-like domain. Tyr-750 and Tyr-755 each carry phosphotyrosine.

It belongs to the MAGUK family. Interacts through its PDZ domains with NETO1. Interacts with NOS1/nNOS through second PDZ domain. Interacts with KCNJ2/Kir2.1 (via C-terminus) through one of its PDZ domains. Interacts with KCNJ4, Interacts with FRMPD4 (via C-terminus). Interacts with LRFN1, LRFN2 and LRFN4. Interacts with FASLG. Interacts with KCNJ4. Interacts with ADAM22. Interacts with DGKI (via PDZ-binding motif). In terms of processing, palmitoylation of isoform 1 is not required for targeting to postsynaptic density.

The protein resides in the cell membrane. It is found in the postsynaptic density. Its subcellular location is the synapse. The protein localises to the membrane. It localises to the cell projection. The protein resides in the axon. It is found in the perikaryon. Required for perception of chronic pain through NMDA receptor signaling. Regulates surface expression of NMDA receptors in dorsal horn neurons of the spinal cord. Interacts with the cytoplasmic tail of NMDA receptor subunits as well as inward rectifying potassium channels. Involved in regulation of synaptic stability at cholinergic synapses. Part of the postsynaptic protein scaffold of excitatory synapses. The chain is Disks large homolog 2 (DLG2) from Homo sapiens (Human).